A 1663-amino-acid polypeptide reads, in one-letter code: Cortactin-binding protein 2 (1663 aa).

Disordered stretches follow at residues 1–23 (MATD…AGAA), 203–222 (KKKT…RSTE), 358–440 (RQAS…LHPG), and 454–479 (GNAN…PTSR). Residues 119-276 (KKMQERMSAQ…EQLKRGSDSK (158 aa)) adopt a coiled-coil conformation. Positions 386-396 (PSTDSTPDPTS) are enriched in low complexity. Residues 411–422 (QTPGIAPQNSQA) are compositionally biased toward polar residues. R498 carries the post-translational modification Asymmetric dimethylarginine. The segment at 499–616 (FTSPQAGAPS…SSPQLPPKPS (118 aa)) is disordered. Positions 583–593 (TVASPPSSLPQ) are enriched in polar residues. ANK repeat units lie at residues 709-739 (GRPT…DINY), 743-772 (DGHS…QINA), 776-805 (NGFT…NINH), 809-838 (GGQT…NRSV), 842-871 (DGWT…PACG), and 912-942 (EGWT…EPER). The interval 1446-1477 (NKKKGESGAWRKVNTSPRRKSGRFSLPTWNKP) is disordered. At S1524 the chain carries Phosphoserine. Disordered stretches follow at residues 1580-1602 (SQKE…KSKT) and 1618-1663 (SKVT…KPNK). The span at 1582 to 1599 (KEVSPLSSHQTTECSNSK) shows a compositional bias: polar residues. The segment covering 1624–1638 (SQNTKRSSSSSNTRQ) has biased composition (low complexity). Basic and acidic residues predominate over residues 1645-1663 (SKKENWNLHKNEHLDKPNK).

Interacts with CTTN/cortactin SH3 domain. Interacts with STRN, STRN4/zinedin and MOB4/phocein; this interactions mediate the association with the STRIPAK core complex and may regulate dendritic spine distribution of the STRIPAK complex in hippocampal neurons. Activation of glutamate receptors weakens the interaction with STRN and STRN4.

It is found in the cytoplasm. Its subcellular location is the cell cortex. The protein localises to the cell projection. The protein resides in the dendritic spine. Its function is as follows. Regulates the dendritic spine distribution of CTTN/cortactin in hippocampal neurons, and thus controls dendritic spinogenesis and dendritic spine maintenance. Associates with the striatin-interacting phosphatase and kinase (STRIPAK) core complex to regulate dendritic spine distribution of the STRIPAK complex in hippocampal neurons. The sequence is that of Cortactin-binding protein 2 (CTTNBP2) from Colobus guereza (Mantled guereza).